The following is a 150-amino-acid chain: Large-conductance mechanosensitive channel (150 aa).

Transmembrane regions (helical) follow at residues 19-39 and 85-105; these read VGIIIGGAFGAIVNTLVSDVL and GIFLNALISFMIMAFAVFMLI.

Belongs to the MscL family. As to quaternary structure, homopentamer.

It localises to the cell inner membrane. Functionally, channel that opens in response to stretch forces in the membrane lipid bilayer. May participate in the regulation of osmotic pressure changes within the cell. The chain is Large-conductance mechanosensitive channel from Chlorobium limicola (strain DSM 245 / NBRC 103803 / 6330).